A 109-amino-acid chain; its full sequence is Small ribosomal subunit protein bS18c (109 aa).

The disordered stretch occupies residues Gly-82–Phe-109.

This sequence belongs to the bacterial ribosomal protein bS18 family. As to quaternary structure, part of the 30S ribosomal subunit.

It localises to the plastid. This chain is Small ribosomal subunit protein bS18c, found in Cuscuta reflexa (Southern Asian dodder).